Here is a 152-residue protein sequence, read N- to C-terminus: Protein Smg homolog (152 aa).

This sequence belongs to the Smg family.

In Bordetella bronchiseptica (strain ATCC BAA-588 / NCTC 13252 / RB50) (Alcaligenes bronchisepticus), this protein is Protein Smg homolog.